The sequence spans 90 residues: MALAREKRAEFSAQKLEPIFEKYPSVKVRWYDVEAFSTKASDIAVFETTSLQDYYFVIDAIRDSEFCTVPYFEFVEIIPAIEDGYVEYES.

Belongs to the darcynin family.

The chain is Darcynin 1 from Acinetobacter baumannii (strain ATCC 17978 / DSM 105126 / CIP 53.77 / LMG 1025 / NCDC KC755 / 5377).